A 441-amino-acid polypeptide reads, in one-letter code: Chitinase-like protein Idgf3 (441 aa).

The signal sequence occupies residues 1–23; it reads MTGSLWLSLALSLAVLAQFKVSA. In terms of domain architecture, GH18 spans 25–441; that stretch reads PNLVCFYDSQ…MLRAIKYRLL (417 aa). Cys29 and Cys56 are disulfide-bonded. N-linked (GlcNAc...) asparagine glycosylation occurs at Asn221. The interval 309–331 is disordered; it reads SGDSGMPVVPSTQGPAPAGPQSK. Cys342 and Cys425 are disulfide-bonded.

This sequence belongs to the glycosyl hydrolase 18 family. IDGF subfamily. Glycosylated.

The protein localises to the secreted. Cooperates with insulin-like peptides to stimulate the proliferation, polarization and motility of imaginal disk cells. May act by stabilizing the binding of insulin-like peptides to its receptor through a simultaneous interaction with both molecules to form a multiprotein signaling complex. In Drosophila yakuba (Fruit fly), this protein is Chitinase-like protein Idgf3 (Idgf3).